Reading from the N-terminus, the 146-residue chain is Hemoglobin subunit beta (146 aa).

One can recognise a Globin domain in the interval 2-146 (HWTAEEKQLI…VAHALARKYH (145 aa)). Residues His63 and His92 each contribute to the heme b site.

This sequence belongs to the globin family. As to quaternary structure, heterotetramer of two alpha chains and two beta chains. Red blood cells.

Its function is as follows. Involved in oxygen transport from the lung to the various peripheral tissues. The sequence is that of Hemoglobin subunit beta (HBB) from Ara ararauna (Blue-and-yellow macaw).